The chain runs to 188 residues: Elongation factor P (188 aa).

The protein belongs to the elongation factor P family.

It is found in the cytoplasm. The protein operates within protein biosynthesis; polypeptide chain elongation. Its function is as follows. Involved in peptide bond synthesis. Stimulates efficient translation and peptide-bond synthesis on native or reconstituted 70S ribosomes in vitro. Probably functions indirectly by altering the affinity of the ribosome for aminoacyl-tRNA, thus increasing their reactivity as acceptors for peptidyl transferase. This is Elongation factor P from Exiguobacterium sibiricum (strain DSM 17290 / CCUG 55495 / CIP 109462 / JCM 13490 / 255-15).